A 216-amino-acid chain; its full sequence is Adenylate kinase (216 aa).

Residue 10-15 (GAGKGT) participates in ATP binding. An NMP region spans residues 30 to 59 (STGDILRENVKKGTALGLKAKSYMDKGELV). Residues T31, R36, 57 to 59 (ELV), 85 to 88 (GFPR), and Q92 each bind AMP. Positions 126 to 163 (GRRICRSCGASYHLVFNPPKAKDLCDSCGGELYQRDDD) are LID. An ATP-binding site is contributed by R127. The Zn(2+) site is built by C130 and C133. 136–137 (SY) lines the ATP pocket. Zn(2+) is bound by residues C150 and C153. AMP contacts are provided by R160 and R171. K199 contributes to the ATP binding site.

This sequence belongs to the adenylate kinase family. Monomer.

It localises to the cytoplasm. It carries out the reaction AMP + ATP = 2 ADP. It participates in purine metabolism; AMP biosynthesis via salvage pathway; AMP from ADP: step 1/1. Catalyzes the reversible transfer of the terminal phosphate group between ATP and AMP. Plays an important role in cellular energy homeostasis and in adenine nucleotide metabolism. The protein is Adenylate kinase of Methanocella arvoryzae (strain DSM 22066 / NBRC 105507 / MRE50).